The chain runs to 389 residues: METMCEVKVITGTSAAAEAAKLADVDVIAAYPITPQTTCVEKLAEFVANGELDAEYIKVESEHSAMSACIGAAATGARTFTATASQGLALMHEMLFIASGMRLPIVMMVANRALSAPINIWNDHQDSIAERDSGWIQIYVEDNQETLDSIIQAYKIAENEDVLLPVMVCLDGFILTHTVEPVTIPKAERVREFLGVYEPKHAYLDPDRPITQGPVGVPDCYMETRKQIEEAMERAKKVIRDVNEEFAEWFKRKYGNGLVEAYNLDNADTVLVAMGSVCGTIKYVIDELKKEGKNVGLLRIRAFRPFPKEDVKELLKDANNIAVLDKNISLGFNKGALGIEMASILKNKKVCNYIVGLGGRDIKIDDIKTIINHVEKAEDDSTLWVGLKE.

In terms of assembly, heterotetramer of one alpha, one beta, one delta and one gamma chain.

The catalysed reaction is 2 oxidized [2Fe-2S]-[ferredoxin] + pyruvate + CoA = 2 reduced [2Fe-2S]-[ferredoxin] + acetyl-CoA + CO2 + H(+). This is Pyruvate synthase subunit PorA (porA) from Methanocaldococcus jannaschii (strain ATCC 43067 / DSM 2661 / JAL-1 / JCM 10045 / NBRC 100440) (Methanococcus jannaschii).